A 44-amino-acid polypeptide reads, in one-letter code: Conotoxin Cl9a (44 aa).

4-carboxyglutamate occurs at positions 7, 8, and 24. Cystine bridges form between Cys-9–Cys-33, Cys-15–Cys-40, and Cys-23–Cys-42.

Expressed by the venom duct.

Its subcellular location is the secreted. The polypeptide is Conotoxin Cl9a (Californiconus californicus (California cone)).